The primary structure comprises 39 residues: Photosystem II reaction center protein J (39 aa).

Residues 9–29 (LWMVATVGGLAAGGLLILFVF) form a helical membrane-spanning segment.

Belongs to the PsbJ family. As to quaternary structure, PSII is composed of 1 copy each of membrane proteins PsbA, PsbB, PsbC, PsbD, PsbE, PsbF, PsbH, PsbI, PsbJ, PsbK, PsbL, PsbM, PsbT, PsbX, PsbY, PsbZ, Psb30/Ycf12, at least 3 peripheral proteins of the oxygen-evolving complex and a large number of cofactors. It forms dimeric complexes.

The protein resides in the plastid. Its subcellular location is the chloroplast thylakoid membrane. One of the components of the core complex of photosystem II (PSII). PSII is a light-driven water:plastoquinone oxidoreductase that uses light energy to abstract electrons from H(2)O, generating O(2) and a proton gradient subsequently used for ATP formation. It consists of a core antenna complex that captures photons, and an electron transfer chain that converts photonic excitation into a charge separation. This Emiliania huxleyi (Coccolithophore) protein is Photosystem II reaction center protein J.